The primary structure comprises 1046 residues: MASSVGNVADSTEPTKRMLSFQGLAELAHREYQAGDFEAAERHCMQLWRQEPDNTGVLLLLSSIHFQCRRLDRSAHFSTLAIKQNPLLAEAYSNLGNVYKERGQLQEAIEHYRHALRLKPDFIDGYINLAAALVAAGDMEGAVQAYVSALQYNPDLYCVRSDLGNLLKALGRLEEAKACYLKAIETQPNFAVAWSNLGCVFNAQGEIWLAIHHFEKAVTLDPNFLDAYINLGNVLKEARIFDRAVAAYLRALSLSPNHAVVHGNLACVYYEQGLIDLAIDTYRRAIELQPHFPDAYCNLANALKEKGSVAEAEDCYNTALRLCPTHADSLNNLANIKREQGNIEEAVRLYRKALEVFPEFAAAHSNLASVLQQQGKLQEALMHYKEAIRISPTFADAYSNMGNTLKEMQDVQGALQCYTRAIQINPAFADAHSNLASIHKDSGNIPEAIASYRTALKLKPDFPDAYCNLAHCLQIVCDWTDYDERMKKLVSIVAEQLEKNRLPSVHPHHSMLYPLSHGFRKAIAERHGNLCLDKINVLHKPPYEHPKDLKLSDGRLRVGYVSSDFGNHPTSHLMQSIPGMHNPDKFEVFCYALSPDDGTNFRVKVMAEANHFIDLSQIPCNGKAADRIHQDGIHILVNMNGYTKGARNELFALRPAPIQAMWLGYPGTSGALFMDYIITDQETSPAEVAEQYSEKLAYMPHTFFIGDHANMFPHLKKKAVIDFKSNGHIYDNRIVLNGIDLKAFLDSLPDVKIVKMKCPDGGDNPDSSNTALNMPVIPMNTIAEAVIEMINRGQIQITINGFSISNGLATTQINNKAATGEEVPRTIIVTTRSQYGLPEDAIVYCNFNQLYKIDPSTLQMWANILKRVPNSVLWLLRFPAVGEPNIQQYAQNMGLPQNRIIFSPVAPKEEHVRRGQLADVCLDTPLCNGHTTGMDVLWAGTPMVTMPGETLASRVAASQLTCLGCLELIAKSRQEYEDIAVKLGTDLEYLKKIRGKVWKQRISSPLFNTKQYTMELERLYLQMWEHYAAGNKPDHMIKPVEVTESA.

Alanine 2 bears the N-acetylalanine mark. Residues serine 3 and serine 4 each carry the phosphoserine; by GSK3-beta; alternate modification. Residues serine 3 and serine 4 are each glycosylated (O-linked (GlcNAc) serine; alternate). At serine 20 the chain carries Phosphoserine. TPR repeat units follow at residues 21-54 (FQGLAELAHREYQAGDFEAAERHCMQLWRQEPDN), 89-122 (AEAYSNLGNVYKERGQLQEAIEHYRHALRLKPDF), 123-156 (IDGYINLAAALVAAGDMEGAVQAYVSALQYNPDL), 157-190 (YCVRSDLGNLLKALGRLEEAKACYLKAIETQPNF), 191-224 (AVAWSNLGCVFNAQGEIWLAIHHFEKAVTLDPNF), 225-258 (LDAYINLGNVLKEARIFDRAVAAYLRALSLSPNH), 259-292 (AVVHGNLACVYYEQGLIDLAIDTYRRAIELQPHF), 293-326 (PDAYCNLANALKEKGSVAEAEDCYNTALRLCPTH), 327-360 (ADSLNNLANIKREQGNIEEAVRLYRKALEVFPEF), 361-394 (AAAHSNLASVLQQQGKLQEALMHYKEAIRISPTF), 395-428 (ADAYSNMGNTLKEMQDVQGALQCYTRAIQINPAF), and 429-462 (ADAHSNLASIHKDSGNIPEAIASYRTALKLKPDF). Residue serine 399 is glycosylated (O-linked (GlcNAc) serine; by autocatalysis). Threonine 454 bears the Phosphothreonine mark. A TPR 13; truncated repeat occupies 463–473 (PDAYCNLAHCL). The DFP motif signature appears at 464-466 (DAY). The Nuclear localization signal motif lies at 487–503 (KKLVSIVAEQLEKNRLP). Histidine 508 (proton acceptor) is an active-site residue. UDP-binding positions include glutamine 849, lysine 852, 906–908 (APK), 911–914 (HVRR), 930–932 (HTT), and aspartate 935. Phosphotyrosine is present on tyrosine 989. Residues 991–1010 (KKIRGKVWKQRISSPLFNTK) form a required for phosphatidylinositol 3,4,5-triphosphate binding region.

The protein belongs to the glycosyltransferase 41 family. O-GlcNAc transferase subfamily. In terms of assembly, monomer; may exist in different oligomerization states in cells. Homotrimer, oligomerizes via TPR repeats 6 and 7. Trimerization is not necessary for activity in vitro, however it increases affinity for UDP-GlcNAc. Component of a THAP1/THAP3-HCFC1-OGT complex. Component of the NSL complex at least composed of MOF/KAT8, KANSL1, KANSL2, KANSL3, MCRS1, PHF20, OGT1/OGT, WDR5 and HCFC1. Found in a complex with KIF5B, RHOT1, RHOT2 and TRAK1. Found in a complex composed of at least SINHCAF, SIN3A, HDAC1, SAP30, RBBP4, OGT and TET1. Component of a complex composed of KMT2E/MLL5, OGT and USP7; the complex stabilizes KMT2E/MLL5, preventing KMT2E/MLL5 ubiquitination and proteasomal-mediated degradation. Interacts (via TPRs 1-6) with SIN3A; the interaction mediates transcriptional repression in parallel with histone deacetylase. Interacts (via TPR 5-6) with TET1, TET2 and TET3. Interacts (via TPR repeats 6 and 7) with ATXN10. Interacts with NSD2. Interacts with PROSER1; this interaction mediates TET2 O-GlcNAcylation and stability by promoting the interaction between OGT and TET2. Post-translationally, ubiquitinated by the SCF(FBXO31) complex, leading to its proteasomal degradation. Phosphorylation on Ser-3 or Ser-4 by GSK3-beta positively regulates its activity. Phosphorylation at Thr-454 by AMPK promotes nuclear localization. In terms of processing, glycosylated via autocatalysis; O-GlcNAcylation at Ser-399 promotes nuclear localization.

It localises to the cytoplasm. It is found in the nucleus. Its subcellular location is the cell membrane. The protein localises to the mitochondrion membrane. The protein resides in the cell projection. The enzyme catalyses L-seryl-[protein] + UDP-N-acetyl-alpha-D-glucosamine = 3-O-(N-acetyl-beta-D-glucosaminyl)-L-seryl-[protein] + UDP + H(+). The catalysed reaction is L-threonyl-[protein] + UDP-N-acetyl-alpha-D-glucosamine = 3-O-(N-acetyl-beta-D-glucosaminyl)-L-threonyl-[protein] + UDP + H(+). It participates in protein modification; protein glycosylation. Its activity is regulated as follows. Subject to product inhibition by UDP. Functionally, catalyzes the transfer of a single N-acetylglucosamine from UDP-GlcNAc to a serine or threonine residue in cytoplasmic and nuclear proteins resulting in their modification with a beta-linked N-acetylglucosamine (O-GlcNAc). Glycosylates a large and diverse number of proteins including histone H2B, AKT1, AMPK, ATG4B, CAPRIN1, EZH2, FNIP1, GSDMD, KRT7, LMNA, LMNB1, LMNB2, RPTOR, HOXA1, PFKL, KMT2E/MLL5, MAPT/TAU, TET2, RBL2, RET, NOD2 and HCFC1. Can regulate their cellular processes via cross-talk between glycosylation and phosphorylation or by affecting proteolytic processing. Involved in insulin resistance in muscle and adipocyte cells via glycosylating insulin signaling components and inhibiting the 'Thr-308' phosphorylation of AKT1, enhancing IRS1 phosphorylation and attenuating insulin signaling. Involved in glycolysis regulation by mediating glycosylation of 6-phosphofructokinase PFKL, inhibiting its activity. Plays a key role in chromatin structure by mediating O-GlcNAcylation of 'Ser-112' of histone H2B: recruited to CpG-rich transcription start sites of active genes via its interaction with TET proteins (TET1, TET2 or TET3). As part of the NSL complex indirectly involved in acetylation of nucleosomal histone H4 on several lysine residues. O-GlcNAcylation of 'Ser-75' of EZH2 increases its stability, and facilitating the formation of H3K27me3 by the PRC2/EED-EZH2 complex. Stabilizes KMT2E/MLL5 by mediating its glycosylation, thereby preventing KMT2E/MLL5 ubiquitination. Regulates circadian oscillation of the clock genes and glucose homeostasis in the liver. Stabilizes clock proteins BMAL1 and CLOCK through O-glycosylation, which prevents their ubiquitination and subsequent degradation. Promotes the CLOCK-BMAL1-mediated transcription of genes in the negative loop of the circadian clock such as PER1/2 and CRY1/2. O-glycosylates HCFC1 and regulates its proteolytic processing and transcriptional activity. Component of a THAP1/THAP3-HCFC1-OGT complex that is required for the regulation of the transcriptional activity of RRM1. Regulates mitochondrial motility in neurons by mediating glycosylation of TRAK1. Promotes autophagy by mediating O-glycosylation of ATG4B. Acts as a regulator of mTORC1 signaling by mediating O-glycosylation of RPTOR and FNIP1: O-GlcNAcylation of RPTOR in response to glucose sufficiency promotes activation of the mTORC1 complex. This is UDP-N-acetylglucosamine--peptide N-acetylglucosaminyltransferase 110 kDa subunit (Ogt) from Mus musculus (Mouse).